We begin with the raw amino-acid sequence, 484 residues long: Probable glycine dehydrogenase (decarboxylating) subunit 2 (484 aa).

N6-(pyridoxal phosphate)lysine is present on K264.

This sequence belongs to the GcvP family. C-terminal subunit subfamily. In terms of assembly, the glycine cleavage system is composed of four proteins: P, T, L and H. In this organism, the P 'protein' is a heterodimer of two subunits. Pyridoxal 5'-phosphate is required as a cofactor.

The catalysed reaction is N(6)-[(R)-lipoyl]-L-lysyl-[glycine-cleavage complex H protein] + glycine + H(+) = N(6)-[(R)-S(8)-aminomethyldihydrolipoyl]-L-lysyl-[glycine-cleavage complex H protein] + CO2. The glycine cleavage system catalyzes the degradation of glycine. The P protein binds the alpha-amino group of glycine through its pyridoxal phosphate cofactor; CO(2) is released and the remaining methylamine moiety is then transferred to the lipoamide cofactor of the H protein. The sequence is that of Probable glycine dehydrogenase (decarboxylating) subunit 2 from Legionella pneumophila (strain Paris).